Here is a 458-residue protein sequence, read N- to C-terminus: Probable alpha-L-glutamate ligase (458 aa).

Residues 1–162 (MSDNKFIIGS…YGVKSAKKSG (162 aa)) are unknown. Residues 163 to 458 (LKIGLLASNP…IEKKLGWKAE (296 aa)) are alpha-L-glutamate ligase. The ATP-grasp domain maps to 267-450 (LQLLQKNNLD…IAGAMIDSIE (184 aa)). ATP contacts are provided by residues Lys-304, 341–342 (EF), Asp-350, and 374–376 (RAN). The Mg(2+) site is built by Asp-411, Glu-423, and Asn-425. Residues Asp-411, Glu-423, and Asn-425 each coordinate Mn(2+).

In the C-terminal section; belongs to the RimK family. The cofactor is Mg(2+). It depends on Mn(2+) as a cofactor.

This Shewanella halifaxensis (strain HAW-EB4) protein is Probable alpha-L-glutamate ligase.